The following is a 91-amino-acid chain: Large ribosomal subunit protein eL43 (91 aa).

Residues 39–60 (CPFCGKDAMRRGAVGIWNCSKC) form a C4-type zinc finger.

It belongs to the eukaryotic ribosomal protein eL43 family.

The chain is Large ribosomal subunit protein eL43 (rpl-37a) from Ostertagia ostertagi (Brown stomach worm).